Reading from the N-terminus, the 85-residue chain is Toxin BmKa1 (85 aa).

Positions 1–19 (MNYLVFFSLALLLMTGVGS) are cleaved as a signal peptide. In terms of domain architecture, LCN-type CS-alpha/beta spans 21–83 (RDGYIADDKN…VPIRVPGKCN (63 aa)). 4 cysteine pairs are disulfide-bonded: cysteine 31–cysteine 82, cysteine 35–cysteine 55, cysteine 41–cysteine 65, and cysteine 45–cysteine 67.

The protein belongs to the long (4 C-C) scorpion toxin superfamily. Sodium channel inhibitor family. Alpha subfamily. Expressed by the venom gland.

Its subcellular location is the secreted. Alpha toxins bind voltage-independently at site-3 of sodium channels (Nav) and inhibit the inactivation of the activated channels, thereby blocking neuronal transmission. The protein is Toxin BmKa1 of Olivierus martensii (Manchurian scorpion).